Reading from the N-terminus, the 348-residue chain is Protein RecA (348 aa).

ATP is bound at residue 65–72 (GPESSGKT).

It belongs to the RecA family.

The protein resides in the cytoplasm. In terms of biological role, can catalyze the hydrolysis of ATP in the presence of single-stranded DNA, the ATP-dependent uptake of single-stranded DNA by duplex DNA, and the ATP-dependent hybridization of homologous single-stranded DNAs. It interacts with LexA causing its activation and leading to its autocatalytic cleavage. The protein is Protein RecA of Alteromonas mediterranea (strain DSM 17117 / CIP 110805 / LMG 28347 / Deep ecotype).